The chain runs to 458 residues: Argininosuccinate lyase (458 aa).

This sequence belongs to the lyase 1 family. Argininosuccinate lyase subfamily.

It localises to the cytoplasm. The enzyme catalyses 2-(N(omega)-L-arginino)succinate = fumarate + L-arginine. The protein operates within amino-acid biosynthesis; L-arginine biosynthesis; L-arginine from L-ornithine and carbamoyl phosphate: step 3/3. This chain is Argininosuccinate lyase, found in Acetivibrio thermocellus (strain ATCC 27405 / DSM 1237 / JCM 9322 / NBRC 103400 / NCIMB 10682 / NRRL B-4536 / VPI 7372) (Clostridium thermocellum).